The following is a 100-amino-acid chain: Urease subunit gamma (100 aa).

Belongs to the urease gamma subunit family. Heterotrimer of UreA (gamma), UreB (beta) and UreC (alpha) subunits. Three heterotrimers associate to form the active enzyme.

It localises to the cytoplasm. The enzyme catalyses urea + 2 H2O + H(+) = hydrogencarbonate + 2 NH4(+). Its pathway is nitrogen metabolism; urea degradation; CO(2) and NH(3) from urea (urease route): step 1/1. The protein is Urease subunit gamma of Cereibacter sphaeroides (strain ATCC 17029 / ATH 2.4.9) (Rhodobacter sphaeroides).